The following is a 753-amino-acid chain: Neuroendocrine convertase 1 (753 aa).

An N-terminal signal peptide occupies residues 1–27 (MEQRGWTLQCTAFAFFCVWCALNSVKA). Positions 28 to 110 (KRQFVNEWAA…QQYEKERSKR (83 aa)) are excised as a propeptide. One can recognise a Peptidase S8 domain in the interval 129 to 450 (QWYLQDTRMT…FGLLNAKALV (322 aa)). Active-site charge relay system residues include Asp167 and His208. 2 disulfide bridges follow: Cys225–Cys374 and Cys317–Cys347. Ser382 (charge relay system) is an active-site residue. An N-linked (GlcNAc...) asparagine glycan is attached at Asn401. Positions 460-597 (NVPEKKECVV…KLILHGTSSQ (138 aa)) constitute a P/Homo B domain. A disulfide bridge connects residues Cys467 and Cys494. Polar residues predominate over residues 633–651 (QKSLNGNLLVPKNSSSSNV). The segment at 633-663 (QKSLNGNLLVPKNSSSSNVEGRRDEQVQGTP) is disordered. The N-linked (GlcNAc...) asparagine glycan is linked to Asn645.

It belongs to the peptidase S8 family. Furin subfamily. Requires Ca(2+) as cofactor.

Its subcellular location is the cytoplasmic vesicle. It is found in the secretory vesicle. The enzyme catalyses Release of protein hormones, neuropeptides and renin from their precursors, generally by hydrolysis of -Lys-Arg-|- bonds.. Its function is as follows. Involved in the processing of hormone and other protein precursors at sites comprised of pairs of basic amino acid residues. Substrates include POMC, renin, enkephalin, dynorphin, somatostatin, insulin and AGRP. This is Neuroendocrine convertase 1 (Pcsk1) from Mus musculus (Mouse).